Here is a 301-residue protein sequence, read N- to C-terminus: Diaminopimelate epimerase (301 aa).

3 residues coordinate substrate: Asn15, Gln47, and Asn67. The Proton donor role is filled by Cys76. Residues 77-78 (GN), Asn163, Asn197, and 215-216 (ER) contribute to the substrate site. Cys224 (proton acceptor) is an active-site residue. 225-226 (GS) contributes to the substrate binding site. Residues 280-301 (SGSLDPSTGLWSRDGTQEAGAR) are disordered.

It belongs to the diaminopimelate epimerase family. In terms of assembly, homodimer.

It is found in the cytoplasm. The catalysed reaction is (2S,6S)-2,6-diaminopimelate = meso-2,6-diaminopimelate. It participates in amino-acid biosynthesis; L-lysine biosynthesis via DAP pathway; DL-2,6-diaminopimelate from LL-2,6-diaminopimelate: step 1/1. Catalyzes the stereoinversion of LL-2,6-diaminopimelate (L,L-DAP) to meso-diaminopimelate (meso-DAP), a precursor of L-lysine and an essential component of the bacterial peptidoglycan. The sequence is that of Diaminopimelate epimerase from Rhizobium leguminosarum bv. trifolii (strain WSM2304).